Consider the following 362-residue polypeptide: Phosphoserine aminotransferase (362 aa).

Residue Arg-43 coordinates L-glutamate. Residues 77–78 (AR), Trp-103, Thr-153, Asp-173, and Gln-196 contribute to the pyridoxal 5'-phosphate site. Lys-197 carries the post-translational modification N6-(pyridoxal phosphate)lysine.

This sequence belongs to the class-V pyridoxal-phosphate-dependent aminotransferase family. SerC subfamily. As to quaternary structure, homodimer. Pyridoxal 5'-phosphate serves as cofactor.

Its subcellular location is the cytoplasm. It catalyses the reaction O-phospho-L-serine + 2-oxoglutarate = 3-phosphooxypyruvate + L-glutamate. It carries out the reaction 4-(phosphooxy)-L-threonine + 2-oxoglutarate = (R)-3-hydroxy-2-oxo-4-phosphooxybutanoate + L-glutamate. It participates in amino-acid biosynthesis; L-serine biosynthesis; L-serine from 3-phospho-D-glycerate: step 2/3. Its pathway is cofactor biosynthesis; pyridoxine 5'-phosphate biosynthesis; pyridoxine 5'-phosphate from D-erythrose 4-phosphate: step 3/5. Functionally, catalyzes the reversible conversion of 3-phosphohydroxypyruvate to phosphoserine and of 3-hydroxy-2-oxo-4-phosphonooxybutanoate to phosphohydroxythreonine. In Legionella pneumophila (strain Paris), this protein is Phosphoserine aminotransferase.